Here is a 1639-residue protein sequence, read N- to C-terminus: Mediator of RNA polymerase II transcription subunit 14 (1639 aa).

An LXXLL motif 1 motif is present at residues 49–53 (LAELL). Disordered regions lie at residues 561 to 586 (GQSP…GSDS) and 709 to 755 (LPQP…KTVH). Over residues 575-586 (SAAGGPAPGSDS) the composition is skewed to low complexity. The span at 711–721 (QPKPPQAPPTP) shows a compositional bias: pro residues. Residues 722–748 (QQQQQQQQQQQQPGTSDAKSSGAGASA) show a composition bias toward low complexity. Positions 768–772 (LKRLL) match the LXXLL motif 2 motif. Disordered stretches follow at residues 1039-1243 (RRSQ…HHYT) and 1558-1639 (MQPG…GGPN). Gly residues-rich tracts occupy residues 1062-1088 (GNNG…GTGM) and 1122-1142 (IGGG…GQGG). A compositionally biased stretch (polar residues) spans 1189–1201 (GPSSLSYMQSHTD). Pro residues predominate over residues 1219–1229 (PGMPRPSPRPG). Gly residues predominate over residues 1558 to 1579 (MQPGGGPGVPGGPGGPMGGQIG). A compositionally biased stretch (low complexity) spans 1589–1603 (VGSSPSPMMHSPMQQ). A compositionally biased stretch (gly residues) spans 1604–1639 (MGGGGPQPGAYGGMVGGPGGGPQSGGPVGGGPGGPN).

This sequence belongs to the Mediator complex subunit 14 family. As to quaternary structure, component of the Mediator complex.

The protein localises to the nucleus. Functionally, component of the Mediator complex, a coactivator involved in the regulated transcription of nearly all RNA polymerase II-dependent genes. Mediator functions as a bridge to convey information from gene-specific regulatory proteins to the basal RNA polymerase II transcription machinery. Mediator is recruited to promoters by direct interactions with regulatory proteins and serves as a scaffold for the assembly of a functional preinitiation complex with RNA polymerase II and the general transcription factors. This Anopheles gambiae (African malaria mosquito) protein is Mediator of RNA polymerase II transcription subunit 14 (MED14).